The primary structure comprises 147 residues: Hemoglobin subunit gamma (147 aa).

The region spanning 3-147 (HFTAEEKAAI…VATALAHKYH (145 aa)) is the Globin domain. 2 residues coordinate heme b: H64 and H93.

The protein belongs to the globin family. As to quaternary structure, heterotetramer of two alpha chains and two gamma chains. As to expression, red blood cells.

In terms of biological role, this protein functions as an embryonic globin, but the gene structure and chromosomal location resemble more closely the human gamma chain gene, which codes for a fetal globin. This Oryctolagus cuniculus (Rabbit) protein is Hemoglobin subunit gamma (HBG).